The sequence spans 503 residues: Long-chain-fatty-acid--CoA ligase FadD13 (503 aa).

It belongs to the ATP-dependent AMP-binding enzyme family. In terms of assembly, homodimer.

The protein localises to the cell membrane. The catalysed reaction is a long-chain fatty acid + ATP + CoA = a long-chain fatty acyl-CoA + AMP + diphosphate. It participates in lipid metabolism; fatty acid biosynthesis. Its function is as follows. Required for maintaining the appropriate mycolic acid composition and permeability of the envelope on its exposure to acidic pH. Catalyzes the activation of long-chain fatty acids as acyl-coenzyme A (acyl-CoA), which are then transferred to the multifunctional polyketide synthase (PKS) type III for further chain extension. In Mycobacterium tuberculosis (strain CDC 1551 / Oshkosh), this protein is Long-chain-fatty-acid--CoA ligase FadD13 (fadD13).